The chain runs to 245 residues: Putative transport permease YvfS (245 aa).

The next 6 membrane-spanning stretches (helical) occupy residues 20-40 (YFVLWSLIMPIAFYYFFTNVV), 53-73 (HYLMSMTVFSVMGSSIMTLGI), 103-123 (IGQSVIHVLSITVIFLFGAII), 137-157 (GLWILFGALPFLALGTLIGLM), 164-184 (AGISNVLYMLLALGGGMWMPF), and 214-234 (GSPTWKNILILIAYMMLFMLL). One can recognise an ABC transmembrane type-2 domain in the interval 20-242 (YFVLWSLIMP…LLSKYIRRKQ (223 aa)).

It belongs to the ABC-2 integral membrane protein family.

Its subcellular location is the cell membrane. In Bacillus subtilis (strain 168), this protein is Putative transport permease YvfS (yvfS).